A 172-amino-acid polypeptide reads, in one-letter code: Spermidine/spermine N(1)-acetyltransferase (172 aa).

The N-acetyltransferase domain occupies 3–172; that stretch reads VKMKKCSRED…TDLIMAKTLI (170 aa). Acetyl-CoA contacts are provided by residues 96-98, 105-109, and 135-137; these read IYI, HGLGK, and NEN. Residue Tyr-142 is the Proton donor of the active site. Residue Lys-144 participates in acetyl-CoA binding.

This sequence belongs to the acetyltransferase family. In terms of assembly, monomer.

The catalysed reaction is an alkane-alpha,omega-diamine + acetyl-CoA = an N-acetylalkane-alpha,omega-diamine + CoA + H(+). Functionally, involved in the protection against polyamine toxicity by regulating their concentration. Could also be involved in the negative control of sporulation as well as production of degradative enzymes such as alpha-amylase, levansucrase and alkaline phosphatase. Catalyzes the transfer of an acetyl group from acetyl coenzyme A (AcCoA) to an acceptor substrate and releases both CoA and the acetylated product. It possesses N1-acetyltransferase activity toward polyamine substrates including spermidine, spermine, aminopropylcadaverine, norspermidine, homospermidine, N(8)-acetylspermidine, diaminopropane and agmatine. The protein is Spermidine/spermine N(1)-acetyltransferase of Bacillus subtilis (strain 168).